Consider the following 150-residue polypeptide: Large ribosomal subunit protein uL22c (150 aa).

Belongs to the universal ribosomal protein uL22 family. Part of the 50S ribosomal subunit.

It localises to the plastid. Its subcellular location is the chloroplast. This protein binds specifically to 23S rRNA. Functionally, the globular domain of the protein is located near the polypeptide exit tunnel on the outside of the subunit, while an extended beta-hairpin is found that lines the wall of the exit tunnel in the center of the 70S ribosome. This is Large ribosomal subunit protein uL22c (rpl22) from Fagopyrum esculentum subsp. ancestrale (Wild buckwheat).